A 379-amino-acid polypeptide reads, in one-letter code: MYTFVVRDENSSVYAEVSRLLLATGHWKRLRRDNPRFNLMLGERNRLPFGRLGHEPGLMQLVNYYRGADKLCRKASLVKLIKTSPELAESCTWFPESYVIYPTNLKTPVAPAQNGIHPPIHSSRTDEREFFLTSYNKKKEDGEGNVWIAKSSAGAKGEGILISSEATELLDFIDNQGQVHVIQKYLERPLLLEPGHRKFDIRSWVLVDHQYNIYLYREGVLRTASEPYHTDNFQDKTCHLTNHCIQKEYSKNYGKYEEGNEMFFEEFNQYLTSALNITLESSILLQIKHIIRSCLLSVEPAISTRHLPYQSFQLFGFDFMVDEDLKVWLIEVNGAPACAQKLYAELCQGIVDIAIASVFPPPDAEQQQQQPPPAAFIKL.

The 368-residue stretch at 3–370 folds into the TTL domain; the sequence is TFVVRDENSS…PPDAEQQQQQ (368 aa).

This sequence belongs to the tubulin--tyrosine ligase family. As to quaternary structure, monomer. It depends on Mg(2+) as a cofactor. K(+) serves as cofactor.

The enzyme catalyses C-terminal L-alpha-aminoacyl-L-glutamyl-L-glutamyl-[tubulin] + L-tyrosine + ATP = C-terminal L-alpha-aminoacyl-L-glutamyl-L-glutamyl-L-tyrosyl-[tubulin] + ADP + phosphate + H(+). Its function is as follows. Catalyzes the post-translational addition of a tyrosine to the C-terminal end of detyrosinated alpha-tubulin. The sequence is that of Tubulin--tyrosine ligase (TTL) from Sus scrofa (Pig).